Here is a 355-residue protein sequence, read N- to C-terminus: Guanine nucleotide-binding protein subunit beta-5a (355 aa).

The interval 1-23 (MAAQEEPAQPGDSLATLKSESDT) is disordered. WD repeat units follow at residues 63–102 (GHGNKVLCMDWCKDKRRIVSSSQDGKVIVWDAFTTNKEHA), 105–144 (MPCTWVMACAYAPSGCAVACGGLDNKCSVYPLSLDKNENL), 153–194 (MHTN…QSFH), 195–238 (GHAA…QSFE), 239–278 (SHDSDINSVRYYPSGDAFASGSDDATCRLYDLRADREVAI), 280–322 (SKES…RVSI), and 325–355 (GHENRVSTLRVSPDGTAFCSGSWDHTLRIWA).

Belongs to the WD repeat G protein beta family. In terms of assembly, may interact with RGS9; this interaction stabilizes both proteins and increases RGS9 GTPase-activating protein (GAP) activity, hence accelerating the deactivation of D(2) dopamine receptor-mediated signaling.

It localises to the membrane. In terms of biological role, enhances GTPase-activating protein (GAP) activity of regulator of G protein signaling (RGS) proteins, such as RGS7 and RGS9, hence involved in the termination of the signaling initiated by the G protein coupled receptors (GPCRs) by accelerating the GTP hydrolysis on the G-alpha subunits, thereby promoting their inactivation. Increases RGS7 GTPase-activating protein (GAP) activity, thereby regulating mood and cognition. Increases RGS9 GTPase-activating protein (GAP) activity, hence contributes to the deactivation of G protein signaling initiated by D(2) dopamine receptors. Along with gnb5b, plays an important role in neuronal signaling, including in the parasympathetic, but not sympathetic, control of heart rate. This Danio rerio (Zebrafish) protein is Guanine nucleotide-binding protein subunit beta-5a.